A 216-amino-acid polypeptide reads, in one-letter code: Kynurenine formamidase (216 aa).

Position 21 (phenylalanine 21) interacts with substrate. Histidine 51, histidine 55, and aspartate 57 together coordinate Zn(2+). The Proton donor/acceptor role is filled by histidine 61. Residues histidine 167 and glutamate 179 each contribute to the Zn(2+) site.

This sequence belongs to the Cyclase 1 superfamily. KynB family. As to quaternary structure, homodimer. Requires Zn(2+) as cofactor.

It carries out the reaction N-formyl-L-kynurenine + H2O = L-kynurenine + formate + H(+). It functions in the pathway amino-acid degradation; L-tryptophan degradation via kynurenine pathway; L-kynurenine from L-tryptophan: step 2/2. Its function is as follows. Catalyzes the hydrolysis of N-formyl-L-kynurenine to L-kynurenine, the second step in the kynurenine pathway of tryptophan degradation. In Paracidovorax citrulli (strain AAC00-1) (Acidovorax citrulli), this protein is Kynurenine formamidase.